The sequence spans 320 residues: MTEAIAVVESRAIAPVQDWDVLQMLLEDHRSPNTRRAYDRDLRLFFAWWLDEDPHPEAIAYWLSLPQSEAIAVVLRWKASMRDRGLAEATINRRLAALKSLVRFSRRLGRCTFSLEDVKGDRVQSYRDTTGTTPERFRELLALPNRQTAKGARDYAILRLLWENALRRSEAVQTRVQDLEQGDRRLWILGKGKGRQRLPVSLSVEMVQALQDWLRWHPKAEPEQPLFTALDRRSYGQQLSDQAVYLLVKRSAEAIKLGKRLSPHRIRHSAITAALDATGGNIRLVQKLSRHSRLETLQRYDDARQDFQGECTEHLAKLLG.

In terms of domain architecture, Core-binding (CB) spans 16-106; sequence VQDWDVLQML…ALKSLVRFSR (91 aa). The Tyr recombinase domain maps to 127–313; it reads RDTTGTTPER…RQDFQGECTE (187 aa). Catalysis depends on residues R167, K193, H264, R267, and H291. Y300 acts as the O-(3'-phospho-DNA)-tyrosine intermediate in catalysis.

Belongs to the 'phage' integrase family.

It localises to the cytoplasm. Functionally, site-specific tyrosine recombinase, which acts by catalyzing the cutting and rejoining of the recombining DNA molecules. The polypeptide is Tyrosine recombinase Synpcc7942_B2651 (Synechococcus elongatus (strain ATCC 33912 / PCC 7942 / FACHB-805) (Anacystis nidulans R2)).